A 292-amino-acid chain; its full sequence is Protease HtpX homolog (292 aa).

2 helical membrane passes run 4–24 and 42–62; these read IFLFIVTNLAILVMLSITLRL and ALLVLSAVIGFGGSLISLAMS. His147 is a binding site for Zn(2+). Glu148 is a catalytic residue. Residue His151 coordinates Zn(2+). 2 helical membrane-spanning segments follow: residues 158-178 and 198-218; these read VTLALIQGVVNTFVIFLSRII and FVTSLVAQLVLGILATIIVMW. Glu224 is a Zn(2+) binding site.

This sequence belongs to the peptidase M48B family. Zn(2+) is required as a cofactor.

It is found in the cell inner membrane. In Nitrosomonas eutropha (strain DSM 101675 / C91 / Nm57), this protein is Protease HtpX homolog.